The following is a 362-amino-acid chain: Phosphoserine aminotransferase (362 aa).

Residues serine 9 and arginine 42 each contribute to the L-glutamate site. Residues 76 to 77, tryptophan 102, threonine 153, aspartate 174, and glutamine 197 each bind pyridoxal 5'-phosphate; that span reads GR. Lysine 198 bears the N6-(pyridoxal phosphate)lysine mark. 239–240 is a pyridoxal 5'-phosphate binding site; it reads NT.

This sequence belongs to the class-V pyridoxal-phosphate-dependent aminotransferase family. SerC subfamily. In terms of assembly, homodimer. Requires pyridoxal 5'-phosphate as cofactor.

The protein resides in the cytoplasm. It carries out the reaction O-phospho-L-serine + 2-oxoglutarate = 3-phosphooxypyruvate + L-glutamate. The enzyme catalyses 4-(phosphooxy)-L-threonine + 2-oxoglutarate = (R)-3-hydroxy-2-oxo-4-phosphooxybutanoate + L-glutamate. It participates in amino-acid biosynthesis; L-serine biosynthesis; L-serine from 3-phospho-D-glycerate: step 2/3. The protein operates within cofactor biosynthesis; pyridoxine 5'-phosphate biosynthesis; pyridoxine 5'-phosphate from D-erythrose 4-phosphate: step 3/5. Functionally, catalyzes the reversible conversion of 3-phosphohydroxypyruvate to phosphoserine and of 3-hydroxy-2-oxo-4-phosphonooxybutanoate to phosphohydroxythreonine. This Escherichia coli (strain ATCC 8739 / DSM 1576 / NBRC 3972 / NCIMB 8545 / WDCM 00012 / Crooks) protein is Phosphoserine aminotransferase.